A 333-amino-acid polypeptide reads, in one-letter code: Type II secretion system protein K (333 aa).

A propeptide spans Met-1 to Gly-7 (leader sequence). A helical transmembrane segment spans residues Val-8–Ile-29. At Arg-30 to Arg-333 the chain is on the periplasmic side. A disordered region spans residues Met-313–Arg-333.

It belongs to the GSP K family. In terms of assembly, type II secretion is composed of four main components: the outer membrane complex, the inner membrane complex, the cytoplasmic secretion ATPase and the periplasm-spanning pseudopilus. Interacts with the tip of the type II pseudopilus subunits XcpV, XcpU and XcpW. Interacts with core component XcpT. Post-translationally, cleaved by prepilin peptidase.

The protein resides in the cell inner membrane. Component of the type II secretion system required for the energy-dependent secretion of extracellular factors such as proteases and toxins from the periplasm. Plays a role in pseudopilus assembly and seems to control its length. Interacts with the pseudopilus tip complex that is critical for the recognition and binding of secretion substrates. Type II pseudopilus confers increased bacterial adhesive capabilities. In Pseudomonas aeruginosa (strain ATCC 15692 / DSM 22644 / CIP 104116 / JCM 14847 / LMG 12228 / 1C / PRS 101 / PAO1), this protein is Type II secretion system protein K (xcpX).